The chain runs to 397 residues: CCA-adding enzyme (397 aa).

Residues Gly-26 and Arg-29 each coordinate ATP. Positions 26 and 29 each coordinate CTP. Residues Asp-39 and Asp-41 each contribute to the Mg(2+) site. Arg-110, Asp-153, Arg-156, Arg-159, and Arg-162 together coordinate ATP. CTP-binding residues include Arg-110, Asp-153, Arg-156, Arg-159, and Arg-162.

The protein belongs to the tRNA nucleotidyltransferase/poly(A) polymerase family. Bacterial CCA-adding enzyme type 3 subfamily. In terms of assembly, homodimer. Requires Mg(2+) as cofactor.

It carries out the reaction a tRNA precursor + 2 CTP + ATP = a tRNA with a 3' CCA end + 3 diphosphate. The catalysed reaction is a tRNA with a 3' CCA end + 2 CTP + ATP = a tRNA with a 3' CCACCA end + 3 diphosphate. Catalyzes the addition and repair of the essential 3'-terminal CCA sequence in tRNAs without using a nucleic acid template. Adds these three nucleotides in the order of C, C, and A to the tRNA nucleotide-73, using CTP and ATP as substrates and producing inorganic pyrophosphate. tRNA 3'-terminal CCA addition is required both for tRNA processing and repair. Also involved in tRNA surveillance by mediating tandem CCA addition to generate a CCACCA at the 3' terminus of unstable tRNAs. While stable tRNAs receive only 3'-terminal CCA, unstable tRNAs are marked with CCACCA and rapidly degraded. This Bacillus cytotoxicus (strain DSM 22905 / CIP 110041 / 391-98 / NVH 391-98) protein is CCA-adding enzyme.